Reading from the N-terminus, the 151-residue chain is Ribosomal RNA large subunit methyltransferase H (151 aa).

Residues Ala101 and Leu119–Phe124 contribute to the S-adenosyl-L-methionine site.

It belongs to the RNA methyltransferase RlmH family. In terms of assembly, homodimer.

The protein localises to the cytoplasm. The catalysed reaction is pseudouridine(1915) in 23S rRNA + S-adenosyl-L-methionine = N(3)-methylpseudouridine(1915) in 23S rRNA + S-adenosyl-L-homocysteine + H(+). Functionally, specifically methylates the pseudouridine at position 1915 (m3Psi1915) in 23S rRNA. This chain is Ribosomal RNA large subunit methyltransferase H, found in Helicobacter pylori (strain G27).